The following is a 92-amino-acid chain: Probable Fe(2+)-trafficking protein (92 aa).

This sequence belongs to the Fe(2+)-trafficking protein family.

Its function is as follows. Could be a mediator in iron transactions between iron acquisition and iron-requiring processes, such as synthesis and/or repair of Fe-S clusters in biosynthetic enzymes. This is Probable Fe(2+)-trafficking protein from Shewanella halifaxensis (strain HAW-EB4).